Consider the following 241-residue polypeptide: Pyridoxine 5'-phosphate synthase (241 aa).

Asparagine 7 contacts 3-amino-2-oxopropyl phosphate. A 1-deoxy-D-xylulose 5-phosphate-binding site is contributed by 9 to 10; sequence DH. Arginine 18 lines the 3-amino-2-oxopropyl phosphate pocket. Catalysis depends on histidine 43, which acts as the Proton acceptor. 1-deoxy-D-xylulose 5-phosphate contacts are provided by arginine 45 and histidine 50. Glutamate 70 acts as the Proton acceptor in catalysis. Threonine 100 contributes to the 1-deoxy-D-xylulose 5-phosphate binding site. Histidine 191 functions as the Proton donor in the catalytic mechanism. Residues glycine 192 and 213 to 214 contribute to the 3-amino-2-oxopropyl phosphate site; that span reads GH.

This sequence belongs to the PNP synthase family. As to quaternary structure, homooctamer; tetramer of dimers.

Its subcellular location is the cytoplasm. It carries out the reaction 3-amino-2-oxopropyl phosphate + 1-deoxy-D-xylulose 5-phosphate = pyridoxine 5'-phosphate + phosphate + 2 H2O + H(+). The protein operates within cofactor biosynthesis; pyridoxine 5'-phosphate biosynthesis; pyridoxine 5'-phosphate from D-erythrose 4-phosphate: step 5/5. Its function is as follows. Catalyzes the complicated ring closure reaction between the two acyclic compounds 1-deoxy-D-xylulose-5-phosphate (DXP) and 3-amino-2-oxopropyl phosphate (1-amino-acetone-3-phosphate or AAP) to form pyridoxine 5'-phosphate (PNP) and inorganic phosphate. The sequence is that of Pyridoxine 5'-phosphate synthase from Nitratidesulfovibrio vulgaris (strain ATCC 29579 / DSM 644 / CCUG 34227 / NCIMB 8303 / VKM B-1760 / Hildenborough) (Desulfovibrio vulgaris).